Here is an 894-residue protein sequence, read N- to C-terminus: Protein translocase subunit SecA (894 aa).

Residues Q87, G105–T109, and D512 each bind ATP. A disordered region spans residues E836–G870. Residues C875, C877, C886, and H887 each contribute to the Zn(2+) site.

It belongs to the SecA family. Monomer and homodimer. Part of the essential Sec protein translocation apparatus which comprises SecA, SecYEG and auxiliary proteins SecDF-YajC and YidC. Requires Zn(2+) as cofactor.

The protein resides in the cell inner membrane. Its subcellular location is the cytoplasm. The catalysed reaction is ATP + H2O + cellular proteinSide 1 = ADP + phosphate + cellular proteinSide 2.. In terms of biological role, part of the Sec protein translocase complex. Interacts with the SecYEG preprotein conducting channel. Has a central role in coupling the hydrolysis of ATP to the transfer of proteins into and across the cell membrane, serving both as a receptor for the preprotein-SecB complex and as an ATP-driven molecular motor driving the stepwise translocation of polypeptide chains across the membrane. The protein is Protein translocase subunit SecA of Glaesserella parasuis serovar 5 (strain SH0165) (Haemophilus parasuis).